The sequence spans 254 residues: Photosystem II 22 kDa protein 2, chloroplastic (254 aa).

The N-terminal 38 residues, 1–38, are a transit peptide targeting the chloroplast; sequence MALQQSMAMPMMVVSDLGTAPRSSPMVQLQRMKKHLVV. 2 consecutive repeat copies span residues 42–148 and 149–253. 4 helical membrane passes run 86-106, 120-140, 184-204, and 219-239; these read VAMLGFAASLLGEAVTGKGIL, AEPLLLFFILFTLLGAIGALG, LFVGRLAQLGIAFSLIGEIIT, and PINEIEPLLLFNILFFFFAAI.

The protein belongs to the ELIP/psbS family.

It is found in the plastid. The protein localises to the chloroplast thylakoid membrane. Involved in high light-mediated energy-dependent nonphotochemical quenching (NPQ, qE) and thermal dissipation (TD) thus regulating energy conversion in photosystem II and protecting from photoinhibition. Also seems to regulate quantum yield of electron transport in fluctuating light conditions. The chain is Photosystem II 22 kDa protein 2, chloroplastic from Oryza sativa subsp. japonica (Rice).